Here is a 118-residue protein sequence, read N- to C-terminus: Fluoride-specific ion channel FluC 2 (118 aa).

Transmembrane regions (helical) follow at residues 1-21 (MMEA…RFAI), 33-53 (FPIA…YIIG), 55-75 (GVTT…FTTF), and 93-113 (ILFL…FLGM). 2 residues coordinate Na(+): glycine 70 and threonine 73.

It belongs to the fluoride channel Fluc/FEX (TC 1.A.43) family.

It is found in the cell membrane. The enzyme catalyses fluoride(in) = fluoride(out). Na(+) is not transported, but it plays an essential structural role and its presence is essential for fluoride channel function. In terms of biological role, fluoride-specific ion channel. Important for reducing fluoride concentration in the cell, thus reducing its toxicity. This chain is Fluoride-specific ion channel FluC 2, found in Bacillus cereus (strain ATCC 10987 / NRS 248).